A 46-amino-acid polypeptide reads, in one-letter code: Spectrin alpha chain, non-erythrocytic 1 (46 aa).

Spectrin repeat units lie at residues 1–5 (AQLAD), 7–14 (FHLQQFFR), 15–20 (SQLLGS), 21–26 (AHEVQR), 27–35 (LAQFVEHWK), and 39–46 (DLFLTFAK).

This sequence belongs to the spectrin family. As to quaternary structure, associates with the gamma-tubulin complex in brain, but not in kidney, liver, sperm, or uterus. Like erythrocyte spectrin, the spectrin-like proteins are capable of forming dimers which can further associate to tetramers. Interacts with isoform 1 of ACP1. Interacts with CALM and EMD. Interacts (via C-terminal spectrin repeats) with TRPC4. Identified in a complex with ACTN4, CASK, IQGAP1, MAGI2, NPHS1 and SPTBN1. Interacts with CLN3; this interaction regulates the fodrin localization at the plasma membrane.

It localises to the cytoplasm. The protein resides in the cytoskeleton. Its subcellular location is the cell cortex. In terms of biological role, fodrin, which seems to be involved in secretion, interacts with calmodulin in a calcium-dependent manner and is thus candidate for the calcium-dependent movement of the cytoskeleton at the membrane. This chain is Spectrin alpha chain, non-erythrocytic 1 (SPTAN1), found in Capra hircus (Goat).